The primary structure comprises 763 residues: Ethylene receptor 2 (763 aa).

3 helical membrane-spanning segments follow: residues 58–78 (FLIA…ATCS), 86–106 (IVLQ…ITMF), and 115–135 (VVLA…ATAI). 2 residues coordinate Cu cation: C97 and H101. A GAF domain is found at 190 to 339 (DRHTILYTTM…VVADQVAVAL (150 aa)). A Histidine kinase domain is found at 382 to 615 (AMYDGMRRPM…TIMLALQFQL (234 aa)). A Response regulatory domain is found at 641–760 (QVILVDSDDT…ALGDELYRVL (120 aa)). 4-aspartylphosphate is present on D692.

This sequence belongs to the ethylene receptor family. The cofactor is Cu cation. In terms of processing, autophosphorylated on serine, threonine and tyrosine residues.

The protein localises to the endoplasmic reticulum membrane. The catalysed reaction is ATP + protein L-histidine = ADP + protein N-phospho-L-histidine.. Ethylene receptor related to bacterial two-component regulators. Acts as a negative regulator of ethylene signaling. May delay the transition from the vegetative stage to the floral stage by up-regulating GI (GIGANTEA) and RCN1 and cause starch accumulation in stems by down-regulating the alpha-amylase AMY3D. The protein is Ethylene receptor 2 of Oryza sativa subsp. japonica (Rice).